A 308-amino-acid chain; its full sequence is Putative S-adenosyl-L-methionine-dependent methyltransferase MAB_4584c (308 aa).

S-adenosyl-L-methionine-binding positions include aspartate 131 and 160-161; that span reads DL.

It belongs to the UPF0677 family.

Functionally, exhibits S-adenosyl-L-methionine-dependent methyltransferase activity. The protein is Putative S-adenosyl-L-methionine-dependent methyltransferase MAB_4584c of Mycobacteroides abscessus (strain ATCC 19977 / DSM 44196 / CCUG 20993 / CIP 104536 / JCM 13569 / NCTC 13031 / TMC 1543 / L948) (Mycobacterium abscessus).